Consider the following 421-residue polypeptide: Mannose-1-phosphate guanylyltransferase regulatory subunit alpha (421 aa).

Positions 2 to 252 (LKAVILIGGP…EGCWSQIKSA (251 aa)) are substrate-binding domain. 2 residues coordinate GDP-alpha-D-mannose: E85 and Q248. The tract at residues 274–421 (LASTKEGGPT…SRSFKNQIIL (148 aa)) is hexapeptide repeat domain. The C-loop stretch occupies residues 357 to 385 (TPSDPNPNDPYSKIDSETLFREGKLTPSI).

It belongs to the transferase hexapeptide repeat family. Component of the GMPPA-GMPPB mannose-1-phosphate guanylyltransferase complex composed of 4 gmppa subunits and 8 gmppb subunits; the complex is organized into three layers, a central layer made up of 2 gmppa dimers sandwiched between two layers each made up of 2 gmppb dimers.

It is found in the cytoplasm. Regulatory subunit of the GMPPA-GMPPB mannose-1-phosphate guanylyltransferase complex; reduces the catalytic activity of GMPPB when part of the complex. Mediates allosteric feedback inhibition of GMPPB catalytic activity upon binding GDP-alpha-D-mannose. Together with GMPPB regulates GDP-alpha-D-mannose levels. This Xenopus tropicalis (Western clawed frog) protein is Mannose-1-phosphate guanylyltransferase regulatory subunit alpha (gmppa).